Here is a 286-residue protein sequence, read N- to C-terminus: Transcription factor egl-46 (286 aa).

The C2H2-type 1; atypical zinc finger occupies 180-200; that stretch reads CICRLCKVKYEDVFKLAQHKC. 2 consecutive C2H2-type zinc fingers follow at residues 208–230 and 248–271; these read YKCP…RRWH and VSCS…STCQ.

The protein belongs to the INSM1 family. As to quaternary structure, interacts (via C-terminus) with egl-44 (via N-terminus); the interaction is direct; the interaction may regulate transcription. As to expression, expressed in touch cells, HSN cells, ventral cord motor neurons and ciliated ray neurons.

Its subcellular location is the nucleus. Its function is as follows. Transcription factor. Represses expression of genes involved in differentiation of touch receptor neurons (TRN), probably acting as a heterodimer with egl-44, perhaps by occupying similar cis-regulatory elements as an unc-86/mec-3 heterodimer. Plays a role in cell fate specification of neurons, including the hook neuron HOB, the gas-sensing neuron BAG and touch receptor neurons. Plays a role in neuron differentiation by repressing the expression of zag-1 in FLP neurons, probably acting as a heterodimer with egl-44; because zag-1 represses expression of egl-46 and egl-44, together these proteins form a bistable, negative-feedback loop that regulates the choice between neuronal fates. Acts downstream of egl-44 to prevent touch cell differentiation in FLP neurons. Involved in male mating behavior, acting in concert with egl-44, via modulation of expression of polycystins lov-1 and pkd-2, homeodomain protein ceh-26, and neuropeptide-like protein nlp-8. Modulates the expression of a subset of terminal differentiation genes involved in O(2)- and CO(2)-sensing, acting in parallel to ets-5 and egl-13. May act upstream of RFX transcription factor daf-19 to regulate gene expression specifically in the HOB neuron. Plays a role in specifying commissural dendrites of the PVD nociceptive neurons, acting in concert with egl-44. In association with egl-44, regulates cell cycle exit in the neuronal Q cell lineage. In Caenorhabditis elegans, this protein is Transcription factor egl-46.